Reading from the N-terminus, the 196-residue chain is Phosphoheptose isomerase (196 aa).

Residues 34 to 192 (MVQCLLGGNK…CEIIDTTLFP (159 aa)) enclose the SIS domain. 49–51 (NGG) serves as a coordination point for substrate. The Zn(2+) site is built by His58 and Gln62. Substrate-binding positions include Gln62, 91 to 92 (ND), 117 to 119 (STS), Ser122, and Gln172. Gln172 and His180 together coordinate Zn(2+).

This sequence belongs to the SIS family. GmhA subfamily. As to quaternary structure, homotetramer. It depends on Zn(2+) as a cofactor.

It localises to the cytoplasm. It carries out the reaction 2 D-sedoheptulose 7-phosphate = D-glycero-alpha-D-manno-heptose 7-phosphate + D-glycero-beta-D-manno-heptose 7-phosphate. Its pathway is carbohydrate biosynthesis; D-glycero-D-manno-heptose 7-phosphate biosynthesis; D-glycero-alpha-D-manno-heptose 7-phosphate and D-glycero-beta-D-manno-heptose 7-phosphate from sedoheptulose 7-phosphate: step 1/1. Catalyzes the isomerization of sedoheptulose 7-phosphate in D-glycero-D-manno-heptose 7-phosphate. This Colwellia psychrerythraea (strain 34H / ATCC BAA-681) (Vibrio psychroerythus) protein is Phosphoheptose isomerase.